We begin with the raw amino-acid sequence, 264 residues long: Thymidylate synthase (264 aa).

Arg-21 contributes to the dUMP binding site. (6R)-5,10-methylene-5,6,7,8-tetrahydrofolate is bound at residue His-51. Arg-126–Arg-127 lines the dUMP pocket. Cys-146 functions as the Nucleophile in the catalytic mechanism. Residues Arg-166–Asp-169, Asn-177, and His-207–Tyr-209 contribute to the dUMP site. Asp-169 serves as a coordination point for (6R)-5,10-methylene-5,6,7,8-tetrahydrofolate. Ala-263 lines the (6R)-5,10-methylene-5,6,7,8-tetrahydrofolate pocket.

This sequence belongs to the thymidylate synthase family. Bacterial-type ThyA subfamily. As to quaternary structure, homodimer.

It localises to the cytoplasm. The enzyme catalyses dUMP + (6R)-5,10-methylene-5,6,7,8-tetrahydrofolate = 7,8-dihydrofolate + dTMP. The protein operates within pyrimidine metabolism; dTTP biosynthesis. Its function is as follows. Catalyzes the reductive methylation of 2'-deoxyuridine-5'-monophosphate (dUMP) to 2'-deoxythymidine-5'-monophosphate (dTMP) while utilizing 5,10-methylenetetrahydrofolate (mTHF) as the methyl donor and reductant in the reaction, yielding dihydrofolate (DHF) as a by-product. This enzymatic reaction provides an intracellular de novo source of dTMP, an essential precursor for DNA biosynthesis. The sequence is that of Thymidylate synthase from Aeromonas hydrophila subsp. hydrophila (strain ATCC 7966 / DSM 30187 / BCRC 13018 / CCUG 14551 / JCM 1027 / KCTC 2358 / NCIMB 9240 / NCTC 8049).